The sequence spans 506 residues: Thyroid hormone receptor alpha (506 aa).

Positions M1–Q32 are disordered. A modulating region spans residues M1–Q52. Zn(2+)-binding residues include C53, C56, C70, C73, C91, C97, C107, and C110. 2 consecutive NR C4-type zinc fingers follow at residues C53 to C73 and C91 to C115. A DNA-binding region (nuclear receptor) is located at residues C53 to D127. The NR LBD domain occupies E163–V407. 3,3',5-triiodo-L-thyronine is bound by residues R228 and S277. The interval G460–S506 is disordered.

The protein belongs to the nuclear hormone receptor family. NR1 subfamily. As to quaternary structure, binds DNA as a dimer; homodimer and heterodimer with RXRB. Interacts with NCOA3 and NCOA6 coactivators, leading to a strong increase of transcription of target genes. Probably interacts with SFPQ. Interacts with C1D. Interacts with AKAP13. Interacts with TP53INP2. Interacts with PER2. Interacts with PER2. Isoform alpha-2 and isoform alpha-1 interact with TACC1, but the interaction with alpha-1 is weaker. The interaction with isoform alpha-1, but not alpha-2, is decreased in the presence of thyroid hormone T3.

The protein resides in the nucleus. Its subcellular location is the cytoplasm. Nuclear hormone receptor that can act as a repressor or activator of transcription. High affinity receptor for thyroid hormones, including triiodothyronine and thyroxine. This chain is Thyroid hormone receptor alpha (THRA), found in Sus scrofa (Pig).